A 429-amino-acid polypeptide reads, in one-letter code: Glutamate-1-semialdehyde 2,1-aminomutase 2 (429 aa).

Position 268 is an N6-(pyridoxal phosphate)lysine (K268).

Belongs to the class-III pyridoxal-phosphate-dependent aminotransferase family. HemL subfamily. Homodimer. Pyridoxal 5'-phosphate serves as cofactor.

It is found in the cytoplasm. The catalysed reaction is (S)-4-amino-5-oxopentanoate = 5-aminolevulinate. It functions in the pathway porphyrin-containing compound metabolism; protoporphyrin-IX biosynthesis; 5-aminolevulinate from L-glutamyl-tRNA(Glu): step 2/2. The chain is Glutamate-1-semialdehyde 2,1-aminomutase 2 from Bacillus cereus (strain B4264).